The chain runs to 93 residues: Integration host factor subunit beta (93 aa).

The protein belongs to the bacterial histone-like protein family. Heterodimer of an alpha and a beta chain.

Its function is as follows. This protein is one of the two subunits of integration host factor, a specific DNA-binding protein that functions in genetic recombination as well as in transcriptional and translational control. The polypeptide is Integration host factor subunit beta (Vibrio vulnificus (strain YJ016)).